Consider the following 250-residue polypeptide: Thioesterase FPSE_09186 (250 aa).

This sequence belongs to the AMT4 thioesterase family.

It participates in secondary metabolite biosynthesis. In terms of biological role, thioesterase; part of the gene cluster that mediates the biosynthesis of the lipopeptides W493 A and B. W493 A and B consist of six amino acid residues D-allo-thr, L-Ala, D-Ala, L-Gln, D-Tyr, and L-Val/L-Ile linked to a 3-hydroxy-4-methyltetradecanoic acid polyketide chain. The biosynthesis starts with formation of the linear polyketide chain by the highly reducing polyketide synthase PKS40. The gene cluster contains a putative acyl-CoA ligase (FPSE_09184) for formation of a CoA thioester polyketide. The thiol bond could be hydrolyzed by the putative thioesterase (FPSE_09186) and then accepted by the first T domain in module 1 of NRPS32. The second T domain is responsible for accepting a threonine, which is adenylated by the A domain and epimerized to the D-allo-threonine formed by the E domain. The five successive modules incorporate Ala, Ala, Gln, Tyr, and Val/Ile into the final product, which is released by cyclization. The protein is Thioesterase FPSE_09186 of Fusarium pseudograminearum (strain CS3096) (Wheat and barley crown-rot fungus).